Consider the following 1124-residue polypeptide: Sodium/hydrogen exchanger 11 (1124 aa).

Transmembrane regions (helical) follow at residues 25 to 45 (LVEE…GGLL), 52 to 72 (CEVI…HMAY), 90 to 110 (FSLY…DVEF), 120 to 140 (VLLT…YVVI), 179 to 199 (IYID…SIFF), 224 to 244 (DILG…CILA), 254 to 274 (IILC…LGMS), 305 to 325 (IFSS…IGCG), 335 to 355 (IPFI…TILL), 372 to 392 (GVVI…APDV), and 405 to 425 (MFIL…SYVM). Residues N447 and N473 are each glycosylated (N-linked (GlcNAc...) asparagine). Helical transmembrane passes span 612–632 (TGQI…WPMA), 641–661 (ISIN…KIII), 674–694 (LEFF…FVKL), and 706–726 (VIMG…IVPI). The tract at residues 642-723 (SINYYFMFLY…IRFLPLFKII (82 aa)) is ion transport-like. An a nucleoside 3',5'-cyclic phosphate-binding site is contributed by 867-999 (IWLEGKDVLI…EYKIWLKLAL (133 aa)).

This sequence belongs to the monovalent cation:proton antiporter 1 (CPA1) transporter (TC 2.A.36) family.

It is found in the membrane. Involved in pH regulation. The protein is Sodium/hydrogen exchanger 11 (SLC9C2) of Homo sapiens (Human).